Consider the following 1254-residue polypeptide: AF4/FMR2 family member 3 (1254 aa).

Residues 45 to 62 (YEPDRNALRRKERERRSQ) are compositionally biased toward basic and acidic residues. 5 disordered regions span residues 45 to 90 (YEPD…GDEL), 139 to 190 (AESR…AAQQ), 261 to 324 (RPMD…GENN), 350 to 534 (EPSK…EGQD), and 552 to 752 (KTTC…SVGS). Polar residues-rich tracts occupy residues 67–76 (DSGSFNSGYS) and 143–158 (AQPQ…SSTP). The segment covering 359–369 (KDSQLVSSGHS) has biased composition (polar residues). The segment covering 406-418 (QQAAQRTALRALA) has biased composition (low complexity). Positions 421-433 (SVVQQTNCRGSAP) are enriched in polar residues. Residues 441 to 472 (SSSSGGSSSSSDSESTSGSDSETESSSSSSES) show a composition bias toward low complexity. Over residues 552-561 (KTTCKEEQRP) the composition is skewed to basic and acidic residues. Residues 577-605 (SPPAAVAVTAAALPPAVPSAPTESAPAPT) are compositionally biased toward low complexity. Residues 615-633 (RRTERTSAGDGANCHRPEE) show a composition bias toward basic and acidic residues. Low complexity-rich tracts occupy residues 694-704 (TESSSSSSSSD) and 732-749 (AASS…SRAS). Position 782 is a phosphoserine (Ser-782). The segment at 813-883 (PGVLSAPSAK…ASTNNTLSGN (71 aa)) is disordered. The segment covering 857 to 869 (REIKKVQGRKESA) has biased composition (basic and acidic residues). Residues 873 to 883 (AASTNNTLSGN) show a composition bias toward polar residues. Position 908 is a phosphoserine (Ser-908). 2 disordered regions span residues 919–991 (ASED…HRDC) and 1128–1171 (AAQA…SGLS). Polar residues-rich tracts occupy residues 922 to 941 (DLTS…ASSN) and 960 to 985 (ASHN…SPGS). Low complexity-rich tracts occupy residues 1132-1146 (PSPW…GSPS) and 1154-1171 (PASS…SGLS).

Belongs to the AF4 family. In terms of tissue distribution, highest levels found in lymphoid tissues, lower levels in brain and lung.

Its subcellular location is the nucleus. Functionally, putative transcription activator that may function in lymphoid development and oncogenesis. The protein is AF4/FMR2 family member 3 (Aff3) of Mus musculus (Mouse).